Consider the following 193-residue polypeptide: Ribosome maturation factor RimM (193 aa).

In terms of domain architecture, PRC barrel spans 100-173 (DDEFYYADLE…TLLIDPLAAG (74 aa)).

The protein belongs to the RimM family. Binds ribosomal protein uS19.

It localises to the cytoplasm. Functionally, an accessory protein needed during the final step in the assembly of 30S ribosomal subunit, possibly for assembly of the head region. Essential for efficient processing of 16S rRNA. May be needed both before and after RbfA during the maturation of 16S rRNA. It has affinity for free ribosomal 30S subunits but not for 70S ribosomes. The polypeptide is Ribosome maturation factor RimM (Rhizobium etli (strain CIAT 652)).